We begin with the raw amino-acid sequence, 331 residues long: Zinc finger protein 660 (331 aa).

Residues 1 to 12 (MRRKTRNFKHKT) show a composition bias toward basic residues. The tract at residues 1 to 35 (MRRKTRNFKHKTVKDNKVLTEGSDQESEKDNSQCC) is disordered. Serine 23 is modified (phosphoserine). 10 C2H2-type zinc fingers span residues 50–72 (YVCT…ERIH), 78–100 (YKCK…RRIH), 106–128 (YTCS…QGIH), 134–156 (YECK…HRVH), 162–184 (YSCI…QRMH), 190–212 (YKCK…QRIH), 218–240 (YECD…QRLH), 246–268 (YKCN…QRVH), 274–296 (YKCN…LRTH), and 302–324 (YKCS…QRKH).

Belongs to the krueppel C2H2-type zinc-finger protein family.

The protein localises to the nucleus. In terms of biological role, may be involved in transcriptional regulation. The sequence is that of Zinc finger protein 660 (ZNF660) from Homo sapiens (Human).